A 613-amino-acid polypeptide reads, in one-letter code: Dihydroxy-acid dehydratase (613 aa).

Aspartate 81 is a binding site for Mg(2+). Residue cysteine 122 participates in [2Fe-2S] cluster binding. Residues aspartate 123 and lysine 124 each contribute to the Mg(2+) site. Lysine 124 carries the post-translational modification N6-carboxylysine. Cysteine 195 contributes to the [2Fe-2S] cluster binding site. Residue glutamate 491 coordinates Mg(2+). The active-site Proton acceptor is serine 517.

Belongs to the IlvD/Edd family. In terms of assembly, homodimer. Requires [2Fe-2S] cluster as cofactor. The cofactor is Mg(2+).

The enzyme catalyses (2R)-2,3-dihydroxy-3-methylbutanoate = 3-methyl-2-oxobutanoate + H2O. It carries out the reaction (2R,3R)-2,3-dihydroxy-3-methylpentanoate = (S)-3-methyl-2-oxopentanoate + H2O. The protein operates within amino-acid biosynthesis; L-isoleucine biosynthesis; L-isoleucine from 2-oxobutanoate: step 3/4. Its pathway is amino-acid biosynthesis; L-valine biosynthesis; L-valine from pyruvate: step 3/4. Functions in the biosynthesis of branched-chain amino acids. Catalyzes the dehydration of (2R,3R)-2,3-dihydroxy-3-methylpentanoate (2,3-dihydroxy-3-methylvalerate) into 2-oxo-3-methylpentanoate (2-oxo-3-methylvalerate) and of (2R)-2,3-dihydroxy-3-methylbutanoate (2,3-dihydroxyisovalerate) into 2-oxo-3-methylbutanoate (2-oxoisovalerate), the penultimate precursor to L-isoleucine and L-valine, respectively. This Nitrobacter hamburgensis (strain DSM 10229 / NCIMB 13809 / X14) protein is Dihydroxy-acid dehydratase.